Consider the following 449-residue polypeptide: Putative cytochrome P450 135A1 (449 aa).

Cysteine 383 provides a ligand contact to heme.

It belongs to the cytochrome P450 family. The cofactor is heme.

This is Putative cytochrome P450 135A1 (cyp135A1) from Mycobacterium tuberculosis (strain CDC 1551 / Oshkosh).